The following is a 47-amino-acid chain: Delta-actitoxin-Ael1b (47 aa).

Cystine bridges form between Cys4-Cys44, Cys6-Cys34, and Cys27-Cys45.

This sequence belongs to the sea anemone sodium channel inhibitory toxin family. Type I subfamily.

The protein resides in the secreted. The protein localises to the nematocyst. Functionally, produces a positive inotropic effect in mammalian heart muscle. Modifies current passing through the fast sodium channel (Nav) in neuroblastoma cells, leading to delayed and incomplete inactivation. Paralyzes the shore crab (C.maenas) by tetanic contractions after intramuscular injection. The polypeptide is Delta-actitoxin-Ael1b (Anthopleura elegantissima (Green aggregating anemone)).